The primary structure comprises 509 residues: Methylmalonyl-CoA decarboxylase subunit alpha (509 aa).

In terms of domain architecture, CoA carboxyltransferase N-terminal spans 4 to 260; the sequence is VQEKIELLHE…NNMEDAPLVD (257 aa). Residues 267–503 enclose the CoA carboxyltransferase C-terminal domain; it reads REDESLNSLL…SKRENRAPKK (237 aa).

Belongs to the AccD/PCCB family. The methylmalonyl-CoA decarboxylase is composed of five subunits: the carboxyltransferase alpha subunit (MmdA), the tunnel beta subunit (MmdB), the biotin-containing gamma subunit (MmdC), and the delta (MmdD) and epsilon (MmdE) subunits. Interacts with the gamma subunit.

Its subcellular location is the cell membrane. The enzyme catalyses (S)-methylmalonyl-CoA + Na(+)(in) + H(+)(out) = propanoyl-CoA + Na(+)(out) + CO2. With respect to regulation, completely inhibited by avidin. In terms of biological role, carboxyltransferase subunit of the sodium ion pump methylmalonyl-CoA decarboxylase, which converts the chemical energy of a decarboxylation reaction into an electrochemical gradient of Na(+) ions across the cytoplasmic membrane, thereby creating a sodium ion motive force that is used for ATP synthesis. The alpha subunit catalyzes the Na(+)-independent carboxyltransfer from methylmalonyl-CoA to the prosthetic biotin group located on the gamma subunit. Can also convert malonyl-CoA into acetyl-CoA. The protein is Methylmalonyl-CoA decarboxylase subunit alpha of Veillonella parvula (Staphylococcus parvulus).